Consider the following 255-residue polypeptide: H-2 class II histocompatibility antigen, E-K alpha chain (255 aa).

Residues 1-25 form the signal peptide; that stretch reads MATIGALVLRFFFIAVLMSSQKSWA. The tract at residues 26 to 109 is alpha-1; the sequence is IKEEHTIIQA…ERSNNTPDAN (84 aa). Over 26–216 the chain is Extracellular; sequence IKEEHTIIQA…EKTLLPETKE (191 aa). Residues 110–203 are alpha-2; it reads VAPEVTVLSR…GLEEPLRKHW (94 aa). One can recognise an Ig-like C1-type domain in the interval 112–204; it reads PEVTVLSRSP…LEEPLRKHWE (93 aa). A disulfide bond links cysteine 132 and cysteine 188. The N-linked (GlcNAc...) asparagine glycan is linked to asparagine 143. The connecting peptide stretch occupies residues 204–216; it reads EFEEKTLLPETKE. The helical transmembrane segment at 217–242 threads the bilayer; sequence NVVCALGLFVGLVGIVVGIILIMKGI. At 243-255 the chain is on the cytoplasmic side; sequence KKRNVVERRQGAL.

This sequence belongs to the MHC class II family.

The protein localises to the membrane. The polypeptide is H-2 class II histocompatibility antigen, E-K alpha chain (Mus musculus (Mouse)).